A 190-amino-acid polypeptide reads, in one-letter code: MPALVLASTSPRRRELLARIGVMPARIAAPEIDETPLKGELPRDYVVRLARGKALAVARAPDEVVLAGDTTVSVGRRILEKPADEPDLRRMLGLLSGRRHHVWSGVCVVGTDGKARVRAVDTIVAFKALSAAEIDAYVASGEGMGKAGGYAIQGRAEAFVRFLSGSHSNVVGLPLFETRALLSSVGIPLG.

Asp69 (proton acceptor) is an active-site residue.

The protein belongs to the Maf family. YhdE subfamily. A divalent metal cation is required as a cofactor.

It localises to the cytoplasm. The catalysed reaction is dTTP + H2O = dTMP + diphosphate + H(+). It carries out the reaction UTP + H2O = UMP + diphosphate + H(+). In terms of biological role, nucleoside triphosphate pyrophosphatase that hydrolyzes dTTP and UTP. May have a dual role in cell division arrest and in preventing the incorporation of modified nucleotides into cellular nucleic acids. This is dTTP/UTP pyrophosphatase from Sphingopyxis alaskensis (strain DSM 13593 / LMG 18877 / RB2256) (Sphingomonas alaskensis).